A 686-amino-acid chain; its full sequence is U3 small nucleolar RNA-associated protein 4 homolog (686 aa).

WD repeat units lie at residues 7–50, 51–92, 93–135, 136–181, 182–226, 227–275, 276–317, 318–377, 378–427, 428–475, 476–516, 517–566, 567–627, and 628–666; these read HRVR…ANYF, QEKF…QALN, IKYA…PDKI, QFER…AVHK, MIVD…SATG, TLVK…SSEK, QWVR…LMEK, VEVK…PLSK, NADH…NISL, KRVS…KHLH, AFQP…VKQL, KLHC…WSRT, VQKQ…FPPT, and NESD…AVER. K321 participates in a covalent cross-link: Glycyl lysine isopeptide (Lys-Gly) (interchain with G-Cter in SUMO2).

In terms of assembly, interacts with HIVEP1 Interacts with NOL11. Part of the small subunit (SSU) processome, composed of more than 70 proteins and the RNA chaperone small nucleolar RNA (snoRNA) U3. May be a component of the proposed t-UTP subcomplex of the ribosomal small subunit (SSU) processome containing at least UTP4, WDR43, HEATR1, UTP15, WDR75. In terms of processing, may be phosphorylated during mitosis; may control the association of this protein with WRD43 and UTP15.

It is found in the nucleus. It localises to the nucleolus. The protein localises to the chromosome. Functionally, ribosome biogenesis factor. Involved in nucleolar processing of pre-18S ribosomal RNA. Part of the small subunit (SSU) processome, first precursor of the small eukaryotic ribosomal subunit. During the assembly of the SSU processome in the nucleolus, many ribosome biogenesis factors, an RNA chaperone and ribosomal proteins associate with the nascent pre-rRNA and work in concert to generate RNA folding, modifications, rearrangements and cleavage as well as targeted d Involved in SSU pre-rRNA processing at sites A', A0, 1 and 2b. Required for optimal pre-ribosomal RNA transcription by RNA polymerase. May be a transcriptional regulator. Its function is as follows. (Microbial infection) Acts as a positive regulator of HIVEP1 which specifically binds to the DNA sequence 5'-GGGACTTTCC-3' found in enhancer elements of numerous viral promoters such as those of HIV-1, SV40, or CMV. The polypeptide is U3 small nucleolar RNA-associated protein 4 homolog (Homo sapiens (Human)).